A 189-amino-acid polypeptide reads, in one-letter code: GTPase NRas (189 aa).

Glycine 10 to serine 17 contributes to the GTP binding site. The Effector region signature appears at tyrosine 32 to tyrosine 40. GTP-binding positions include aspartate 57 to glutamine 61 and asparagine 116 to aspartate 119. Residues tyrosine 166 to proline 185 form a hypervariable region region. Residue cysteine 181 is the site of S-palmitoyl cysteine attachment. The S-farnesyl cysteine moiety is linked to residue cysteine 186. A propeptide spans lysine 187 to methionine 189 (removed in mature form).

Belongs to the small GTPase superfamily. Ras family. Palmitoylated by the ZDHHC9-GOLGA7 complex. Depalmitoylated by abhd17a, abhd17b and abhd17c. A continuous cycle of de- and re-palmitoylation regulates rapid exchange between plasma membrane and Golgi.

Its subcellular location is the cell membrane. It is found in the golgi apparatus membrane. It carries out the reaction GTP + H2O = GDP + phosphate + H(+). Its activity is regulated as follows. Alternates between an inactive form bound to GDP and an active form bound to GTP. Activated by a guanine nucleotide-exchange factor (GEF) and inactivated by a GTPase-activating protein (GAP). Functionally, ras proteins bind GDP/GTP and possess intrinsic GTPase activity. In Xenopus laevis (African clawed frog), this protein is GTPase NRas (nras).